Here is a 1723-residue protein sequence, read N- to C-terminus: Lys-gingipain HG66 (1723 aa).

An N-terminal signal peptide occupies residues 1–24; the sequence is MRKLLLLIAASLLGVGLYAQNAKI. A propeptide spanning residues 25-228 is cleaved from the precursor; it reads KLDAPTTRTT…ETAYKQLFNR (204 aa). Ca(2+) contacts are provided by aspartate 313, aspartate 337, aspartate 339, phenylalanine 341, and glutamate 343. The active-site Proton donor is histidine 444. Cysteine 477 acts as the Nucleophile in catalysis. Residues phenylalanine 482 and glutamate 491 each contribute to the Ca(2+) site. Positions 965-985 are disordered; it reads DAPNGTPNPNPNPNPGTTTLS. The Ca(2+) site is built by serine 987, glutamate 989, aspartate 1000, aspartate 1002, aspartate 1004, histidine 1006, serine 1021, glycine 1023, asparagine 1042, aspartate 1145, and glutamate 1146.

Belongs to the peptidase C25 family. Proteolytically cleaved into a catalytic subunit and three adhesins. Arg-gingipain is involved in this post-translational processing.

The protein localises to the secreted. It catalyses the reaction Endopeptidase with strict specificity for lysyl bonds.. Cysteine proteinase with a strong preference for substrates with Lys in the P1 position. Hydrolyzes bovine hemoglobin, bovine serum albumin, casein, human placental type I collagen and human IgA and IgG. Disrupts the functions of polymorphonuclear leukocytes. May act as a virulence factor in the development of peridontal disease. Involved in the coaggregation of P.gingivalis with other oral bacteria. This is Lys-gingipain HG66 from Porphyromonas gingivalis (Bacteroides gingivalis).